Consider the following 695-residue polypeptide: Hypersensitivity response secretion protein HrpI (695 aa).

7 consecutive transmembrane segments (helical) span residues Leu21–Leu38, Val45–Ala61, Leu68–Thr92, Phe111–Ile135, Ala203–Leu223, Gly244–Ile262, and Val311–Leu327.

The protein belongs to the FHIPEP (flagella/HR/invasion proteins export pore) family.

The protein resides in the cell inner membrane. In terms of biological role, involved in the secretion of harpin-pss; a proteinaceous elicitor of the hypersensitivity response in plants. The chain is Hypersensitivity response secretion protein HrpI (hrpI) from Pseudomonas syringae pv. syringae.